A 90-amino-acid polypeptide reads, in one-letter code: Small ribosomal subunit protein uS17 (90 aa).

This sequence belongs to the universal ribosomal protein uS17 family. In terms of assembly, part of the 30S ribosomal subunit.

One of the primary rRNA binding proteins, it binds specifically to the 5'-end of 16S ribosomal RNA. This is Small ribosomal subunit protein uS17 from Dehalococcoides mccartyi (strain ATCC BAA-2100 / JCM 16839 / KCTC 5957 / BAV1).